The chain runs to 463 residues: Dialkyldecalin synthase (463 aa).

Residues valine 13, 32-33 (ER), isoleucine 121, and aspartate 275 contribute to the FAD site.

This sequence belongs to the PheA/TfdB FAD monooxygenase family. As to quaternary structure, homodimer. The cofactor is FAD.

It carries out the reaction 4-[(2E,7S,8E,10E,13R,14R,16E,18E)-14-ethyl-7,13-dihydroxy-2,16,18-trimethylicosa-2,8,10,16,18-pentaenoyl]-2-methylidene-5-oxo-2,5-dihydro-1H-pyrrol-3-olate = 4-[(1R,2R,4aS,5S,8aR)-2-[(2R,3R,5E,7E)-3-ethyl-2-hydroxy-5,7-dimethylnona-5,7-dien-1-yl]-5-hydroxy-1-methyl-1,2,4a,5,6,7,8,8a-octahydronaphthalene-1-carbonyl]-2-methylidene-5-oxo-2,5-dihydro-1H-pyrrol-3-olate. It functions in the pathway antibiotic biosynthesis. Its function is as follows. Involved in the biosynthesis of the spirotetramate antibiotics pyrroindomycins. Catalyzes the intramolecular cyclization forming the dialkyldecalin moiety in pyrroindomycins, via an endo-selective [4+2] cycloaddition reaction. In Streptomyces rugosporus, this protein is Dialkyldecalin synthase.